A 629-amino-acid polypeptide reads, in one-letter code: Embryonic polyadenylate-binding protein A (629 aa).

4 consecutive RRM domains span residues 11–89 (ASLY…WSQR), 99–175 (GNVF…HFKS), 191–268 (TNVY…RAQK), and 294–370 (VNLY…LAQR). The region spanning 539 to 616 (QEPLTASLLA…AVAVLQAHQA (78 aa)) is the PABC domain.

It belongs to the polyadenylate-binding protein type-1 family. Interacts with dazl in an RNA-independent manner. The C-terminus can self-associate and also interact with the C-terminus of pabpc1, independently of RNA. RRM 1 and RRM 2 interact with both eif4g1 and paip1, and the C-terminus also interacts with paip1. Prior to oocyte maturation, found in a complex with dazl and pum2 proteins and spdy1 mRNA; pum2 dissociates from the complex during maturation. Interacts with the translation termination factor sup35/erf3. As to expression, expressed in adult testis, but at a reduced level compared to oocytes.

It is found in the cytoplasm. In terms of biological role, binds and protects the poly(A) tail of mRNA with or without an AU-rich element (ARE) and prevents mRNA deadenylation. Stimulates the translation of mRNAs to which it is bound during early development. The sequence is that of Embryonic polyadenylate-binding protein A (epabp-a) from Xenopus laevis (African clawed frog).